Reading from the N-terminus, the 559-residue chain is Hepatocyte nuclear factor 1-alpha (559 aa).

In terms of domain architecture, HNF-p1 spans 13 to 44 (GPGRLSALQEQLIWALLGSGLSREVLVHALGE). The segment at 14–43 (PGRLSALQEQLIWALLGSGLSREVLVHALG) is dimerization. Residues 49-62 (RVTPGAEKGDRGDG) are compositionally biased toward basic and acidic residues. The tract at residues 49–73 (RVTPGAEKGDRGDGESSEEGEMDFP) is disordered. Positions 78 to 173 (QELEALAPEE…ISQQFTNARH (96 aa)) constitute a POU-specific atypical domain. Interaction with DNA regions lie at residues 121–123 (QRE), 134–140 (HLSQHLN), 146–149 (KNQK), 192–195 (RFKW), 252–254 (RVY), and 259–262 (NRRK). The Nuclear localization signal signature appears at 186-194 (RKGRRNRFK). The homeobox; HNF1-type DNA-binding region spans 188–268 (GRRNRFKWGP…NRRKEEAFRH (81 aa)). Residues 492–559 (TDPEEQTDQP…IPAQMVSTAQ (68 aa)) are disordered. Residues 499 to 522 (DQPIQEDSLHLQSPSPVPVSSGNL) are compositionally biased toward polar residues.

The protein belongs to the HNF1 homeobox family. In terms of assembly, binds DNA as a dimer. In terms of tissue distribution, expressed in liver, intestine, spleen and kidney.

It localises to the nucleus. In terms of biological role, transcriptional activator that regulates the tissue specific expression of multiple genes, especially in pancreas and liver. Binds to the promoter of the albumin gene. The chain is Hepatocyte nuclear factor 1-alpha (hnf1a) from Salmo salar (Atlantic salmon).